The primary structure comprises 108 residues: Large ribosomal subunit protein eL30 (108 aa).

Belongs to the eukaryotic ribosomal protein eL30 family.

In Saccharolobus solfataricus (strain ATCC 35092 / DSM 1617 / JCM 11322 / P2) (Sulfolobus solfataricus), this protein is Large ribosomal subunit protein eL30 (rpl30e).